Consider the following 374-residue polypeptide: Anhydro-N-acetylmuramic acid kinase (374 aa).

Gly15–Asp22 lines the ATP pocket.

This sequence belongs to the anhydro-N-acetylmuramic acid kinase family.

It catalyses the reaction 1,6-anhydro-N-acetyl-beta-muramate + ATP + H2O = N-acetyl-D-muramate 6-phosphate + ADP + H(+). It participates in amino-sugar metabolism; 1,6-anhydro-N-acetylmuramate degradation. Its pathway is cell wall biogenesis; peptidoglycan recycling. Functionally, catalyzes the specific phosphorylation of 1,6-anhydro-N-acetylmuramic acid (anhMurNAc) with the simultaneous cleavage of the 1,6-anhydro ring, generating MurNAc-6-P. Is required for the utilization of anhMurNAc either imported from the medium or derived from its own cell wall murein, and thus plays a role in cell wall recycling. In Xanthomonas axonopodis pv. citri (strain 306), this protein is Anhydro-N-acetylmuramic acid kinase.